The following is a 234-amino-acid chain: Sugar fermentation stimulation protein A (234 aa).

A DNA-binding region (H-T-H motif) is located at residues 201–220 (LLSEAQQRGVEILAYKAELS).

Belongs to the SfsA family.

In terms of biological role, binds to DNA non-specifically. Could be a regulatory factor involved in maltose metabolism. In Escherichia coli O127:H6 (strain E2348/69 / EPEC), this protein is Sugar fermentation stimulation protein A.